A 245-amino-acid polypeptide reads, in one-letter code: Octanoyltransferase (245 aa).

A BPL/LPL catalytic domain is found at Q54–I242. Substrate contacts are provided by residues R93–H100, A173–G175, and G186–S188. The active-site Acyl-thioester intermediate is C204.

It belongs to the LipB family.

It is found in the cytoplasm. It catalyses the reaction octanoyl-[ACP] + L-lysyl-[protein] = N(6)-octanoyl-L-lysyl-[protein] + holo-[ACP] + H(+). The protein operates within protein modification; protein lipoylation via endogenous pathway; protein N(6)-(lipoyl)lysine from octanoyl-[acyl-carrier-protein]: step 1/2. Functionally, catalyzes the transfer of endogenously produced octanoic acid from octanoyl-acyl-carrier-protein onto the lipoyl domains of lipoate-dependent enzymes. Lipoyl-ACP can also act as a substrate although octanoyl-ACP is likely to be the physiological substrate. The polypeptide is Octanoyltransferase (Bartonella quintana (strain Toulouse) (Rochalimaea quintana)).